A 432-amino-acid chain; its full sequence is MIRVAVITLGCPKNQVESEYMLGILEKNHLEVVSDPRQAEVVIINTCSFITAAREEALDTILELARAANHPRLIVAGCLAQQYASELWQELPEAAAFIGPGATGRLPEIINRVLKGERVLDVPGPEMITGELPRLIEDGKPFAYLKIAEGCNNRCTYCTIPSIKGPYRSRPLEKVVAEAVSLAARGIKELVLVAQDTTAYGLDCYGEYRLPELLRRLARIEGIEWVRLLYAYPTRITPELIEVMATEPGVVPYLDLPLQHASEGVLRRMGRPGTGAAGLRAIESLRRAIPEITIRSTFIVGFPGEEEEDFQILLDFLTDARLDWVGAFKFSPEEGTIAASLPGQVPEEVKEERYQRLMLHQQSITRACNEGWLGREVQVLKEGPEVGRSMRQAPEVDGVVYVKGDPSPAGSMVTVKLTQLYNIYDFLGEIKL.

In terms of domain architecture, MTTase N-terminal spans 2-115; sequence IRVAVITLGC…LPEIINRVLK (114 aa). [4Fe-4S] cluster is bound by residues C11, C47, C78, C151, C155, and C158. Residues 137-367 form the Radical SAM core domain; the sequence is EDGKPFAYLK…MLHQQSITRA (231 aa).

It belongs to the methylthiotransferase family. RimO subfamily. It depends on [4Fe-4S] cluster as a cofactor.

It is found in the cytoplasm. It catalyses the reaction L-aspartate(89)-[ribosomal protein uS12]-hydrogen + (sulfur carrier)-SH + AH2 + 2 S-adenosyl-L-methionine = 3-methylsulfanyl-L-aspartate(89)-[ribosomal protein uS12]-hydrogen + (sulfur carrier)-H + 5'-deoxyadenosine + L-methionine + A + S-adenosyl-L-homocysteine + 2 H(+). In terms of biological role, catalyzes the methylthiolation of an aspartic acid residue of ribosomal protein uS12. The protein is Ribosomal protein uS12 methylthiotransferase RimO of Moorella thermoacetica (strain ATCC 39073 / JCM 9320).